The primary structure comprises 37 residues: Large ribosomal subunit protein bL36 (37 aa).

It belongs to the bacterial ribosomal protein bL36 family.

The chain is Large ribosomal subunit protein bL36 from Thermosynechococcus vestitus (strain NIES-2133 / IAM M-273 / BP-1).